Here is a 47-residue protein sequence, read N- to C-terminus: Large ribosomal subunit protein eL40 (47 aa).

It belongs to the eukaryotic ribosomal protein eL40 family.

This chain is Large ribosomal subunit protein eL40, found in Halobacterium salinarum (strain ATCC 29341 / DSM 671 / R1).